Consider the following 537-residue polypeptide: Arginine--tRNA ligase (537 aa).

The short motif at 113–123 is the 'HIGH' region element; that stretch reads ANPTGELHLGH.

This sequence belongs to the class-I aminoacyl-tRNA synthetase family. In terms of assembly, monomer.

Its subcellular location is the cytoplasm. The enzyme catalyses tRNA(Arg) + L-arginine + ATP = L-arginyl-tRNA(Arg) + AMP + diphosphate. This is Arginine--tRNA ligase (argS) from Mycoplasma pneumoniae (strain ATCC 29342 / M129 / Subtype 1) (Mycoplasmoides pneumoniae).